An 893-amino-acid polypeptide reads, in one-letter code: UPF0182 protein CLB_0018 (893 aa).

Transmembrane regions (helical) follow at residues 9–29 (IPLF…NFII), 49–69 (AIII…WMYY), 94–114 (LFFI…SSSY), 154–174 (VIIS…FILE), 202–222 (LAIV…IKIW), 246–266 (FYKI…LSIV), and 273–293 (VSIC…ASFL).

The protein belongs to the UPF0182 family.

It is found in the cell membrane. The polypeptide is UPF0182 protein CLB_0018 (Clostridium botulinum (strain ATCC 19397 / Type A)).